The primary structure comprises 122 residues: Large ribosomal subunit protein uL18 (122 aa).

It belongs to the universal ribosomal protein uL18 family. As to quaternary structure, part of the 50S ribosomal subunit; part of the 5S rRNA/L5/L18/L25 subcomplex. Contacts the 5S and 23S rRNAs.

This is one of the proteins that bind and probably mediate the attachment of the 5S RNA into the large ribosomal subunit, where it forms part of the central protuberance. The polypeptide is Large ribosomal subunit protein uL18 (Lachnospira eligens (strain ATCC 27750 / DSM 3376 / VPI C15-48 / C15-B4) (Eubacterium eligens)).